A 463-amino-acid chain; its full sequence is V-type proton ATPase subunit S1 (463 aa).

An N-terminal signal peptide occupies residues 1 to 32; it reads MMAATVVSRIRTGTRWAPVLWLLLSLVAVAAA. Positions 33–225 are excised as a propeptide; the sequence is VAAEQQVPLV…TAVRPSRVAR (193 aa). Residues 33 to 412 lie on the Lumenal side of the membrane; sequence VAAEQQVPLV…EQFSYASDCA (380 aa). 8 N-linked (GlcNAc...) asparagine glycosylation sites follow: N164, N255, N267, N290, N297, N344, N351, and N399. The chain crosses the membrane as a helical span at residues 413-433; the sequence is GFFSPGIWMGLLTTLFMLFIF. Topologically, residues 434–463 are cytoplasmic; it reads TYGLHMILSLKTMDRFDDRKGPTITLTQIV.

This sequence belongs to the vacuolar ATPase subunit S1 family. As to quaternary structure, accessory component of the multisubunit proton-transporting vacuolar (V)-ATPase protein pump. Interacts (via N-terminus) with ATP6AP2 (via N-terminus). Interacts with RNASEK. Interacts with TMEM106B (via C-terminus). In terms of processing, N-glycosylated. In terms of tissue distribution, expressed in brain (at protein level).

The protein localises to the endoplasmic reticulum membrane. The protein resides in the endoplasmic reticulum-Golgi intermediate compartment membrane. Its subcellular location is the cytoplasmic vesicle. It localises to the secretory vesicle. It is found in the synaptic vesicle membrane. The protein localises to the clathrin-coated vesicle membrane. In terms of biological role, accessory subunit of the proton-transporting vacuolar (V)-ATPase protein pump, which is required for luminal acidification of secretory vesicles. Guides the V-type ATPase into specialized subcellular compartments, such as neuroendocrine regulated secretory vesicles or the ruffled border of the osteoclast, thereby regulating its activity. Involved in membrane trafficking and Ca(2+)-dependent membrane fusion. May play a role in the assembly of the V-type ATPase complex. In aerobic conditions, involved in intracellular iron homeostasis, thus triggering the activity of Fe(2+) prolyl hydroxylase (PHD) enzymes, and leading to HIF1A hydroxylation and subsequent proteasomal degradation. In islets of Langerhans cells, may regulate the acidification of dense-core secretory granules. The chain is V-type proton ATPase subunit S1 (Atp6ap1) from Rattus norvegicus (Rat).